The sequence spans 606 residues: 4-hydroxy-3-methylbut-2-en-1-yl diphosphate synthase (flavodoxin) (606 aa).

Residues C513, C516, C547, and E554 each contribute to the [4Fe-4S] cluster site.

This sequence belongs to the IspG family. The cofactor is [4Fe-4S] cluster.

The catalysed reaction is (2E)-4-hydroxy-3-methylbut-2-enyl diphosphate + oxidized [flavodoxin] + H2O + 2 H(+) = 2-C-methyl-D-erythritol 2,4-cyclic diphosphate + reduced [flavodoxin]. It functions in the pathway isoprenoid biosynthesis; isopentenyl diphosphate biosynthesis via DXP pathway; isopentenyl diphosphate from 1-deoxy-D-xylulose 5-phosphate: step 5/6. In terms of biological role, converts 2C-methyl-D-erythritol 2,4-cyclodiphosphate (ME-2,4cPP) into 1-hydroxy-2-methyl-2-(E)-butenyl 4-diphosphate. The chain is 4-hydroxy-3-methylbut-2-en-1-yl diphosphate synthase (flavodoxin) from Chlamydia abortus (strain DSM 27085 / S26/3) (Chlamydophila abortus).